Here is an 851-residue protein sequence, read N- to C-terminus: DNA mismatch repair protein MutS (851 aa).

An ATP-binding site is contributed by 602–609; the sequence is GPNMSGKS.

The protein belongs to the DNA mismatch repair MutS family.

This protein is involved in the repair of mismatches in DNA. It is possible that it carries out the mismatch recognition step. This protein has a weak ATPase activity. The polypeptide is DNA mismatch repair protein MutS (Streptococcus pyogenes serotype M3 (strain SSI-1)).